Here is a 246-residue protein sequence, read N- to C-terminus: Probable transcriptional regulatory protein CLB_3102 (246 aa).

The protein belongs to the TACO1 family.

The protein resides in the cytoplasm. This Clostridium botulinum (strain ATCC 19397 / Type A) protein is Probable transcriptional regulatory protein CLB_3102.